The primary structure comprises 204 residues: LexA repressor (204 aa).

The H-T-H motif DNA-binding region spans 28 to 48 (RAEIAQELGFKSPNAAEEHLK). Active-site for autocatalytic cleavage activity residues include serine 125 and lysine 162.

This sequence belongs to the peptidase S24 family. As to quaternary structure, homodimer.

It carries out the reaction Hydrolysis of Ala-|-Gly bond in repressor LexA.. In terms of biological role, represses a number of genes involved in the response to DNA damage (SOS response), including recA and lexA. In the presence of single-stranded DNA, RecA interacts with LexA causing an autocatalytic cleavage which disrupts the DNA-binding part of LexA, leading to derepression of the SOS regulon and eventually DNA repair. The chain is LexA repressor from Pseudomonas aeruginosa (strain LESB58).